Consider the following 76-residue polypeptide: MGGLSIWHWLIVLLIVALVFGTKKLRNIGNDLGSAVKGFKDGMKEGETPADAQQLPRSGAVDVNAKETTRSDSNKA.

A helical transmembrane segment spans residues methionine 1–glycine 21. Residues lysine 40–alanine 76 form a disordered region. Residues asparagine 64–alanine 76 are compositionally biased toward basic and acidic residues.

It belongs to the TatA/E family. In terms of assembly, the Tat system comprises two distinct complexes: a TatABC complex, containing multiple copies of TatA, TatB and TatC subunits, and a separate TatA complex, containing only TatA subunits. Substrates initially bind to the TatABC complex, which probably triggers association of the separate TatA complex to form the active translocon.

The protein resides in the cell inner membrane. In terms of biological role, part of the twin-arginine translocation (Tat) system that transports large folded proteins containing a characteristic twin-arginine motif in their signal peptide across membranes. TatA could form the protein-conducting channel of the Tat system. The polypeptide is Sec-independent protein translocase protein TatA (Burkholderia cenocepacia (strain HI2424)).